Here is a 273-residue protein sequence, read N- to C-terminus: NAD-dependent protein deacylase (273 aa).

A Deacetylase sirtuin-type domain is found at 20–272 (RERLRQRIFF…PEFVEKLLKG (253 aa)). 48–67 (GAGISAESGIRTFRAADGLW) is a binding site for NAD(+). Tyr92 and Arg95 together coordinate substrate. 129–132 (QNID) contacts NAD(+). The active-site Proton acceptor is the His147. Cys155 and Cys174 together coordinate Zn(2+). Residues 214–216 (GTS), 240–242 (NLE), and Ala258 contribute to the NAD(+) site.

It belongs to the sirtuin family. Class III subfamily. It depends on Zn(2+) as a cofactor.

The protein resides in the cytoplasm. It catalyses the reaction N(6)-acetyl-L-lysyl-[protein] + NAD(+) + H2O = 2''-O-acetyl-ADP-D-ribose + nicotinamide + L-lysyl-[protein]. The enzyme catalyses N(6)-succinyl-L-lysyl-[protein] + NAD(+) + H2O = 2''-O-succinyl-ADP-D-ribose + nicotinamide + L-lysyl-[protein]. It carries out the reaction N(6)-(2-hydroxyisobutanoyl)-L-lysyl-[protein] + NAD(+) + H2O = 2''-O-(2-hydroxyisobutanoyl)-ADP-D-ribose + nicotinamide + L-lysyl-[protein]. Functionally, NAD-dependent lysine deacetylase that specifically removes acetyl groups on target proteins. Also acts as a protein-lysine deacylase by mediating protein desuccinylation and de-2-hydroxyisobutyrylation. Modulates the activities of several proteins which are inactive in their acylated form. The protein is NAD-dependent protein deacylase of Escherichia coli O157:H7.